The chain runs to 510 residues: Arginine biosynthesis bifunctional protein ArgJ, mitochondrial (510 aa).

Polar residues predominate over residues 57–70 (TSTNEPSAATTNVP). A disordered region spans residues 57 to 76 (TSTNEPSAATTNVPHPQEAP). Substrate contacts are provided by T222, K248, T267, and E364. The active-site Nucleophile is the T267.

It belongs to the ArgJ family. In terms of assembly, heterodimer of an alpha and a beta chain. Post-translationally, the alpha and beta chains are autoproteolytically processed from a single precursor protein within the mitochondrion.

It is found in the mitochondrion matrix. The enzyme catalyses N(2)-acetyl-L-ornithine + L-glutamate = N-acetyl-L-glutamate + L-ornithine. It catalyses the reaction L-glutamate + acetyl-CoA = N-acetyl-L-glutamate + CoA + H(+). It participates in amino-acid biosynthesis; L-arginine biosynthesis; L-ornithine and N-acetyl-L-glutamate from L-glutamate and N(2)-acetyl-L-ornithine (cyclic): step 1/1. It functions in the pathway amino-acid biosynthesis; L-arginine biosynthesis; N(2)-acetyl-L-ornithine from L-glutamate: step 1/4. Functionally, catalyzes two activities which are involved in the cyclic version of arginine biosynthesis: the synthesis of acetylglutamate from glutamate and acetyl-CoA, and of ornithine by transacetylation between acetylornithine and glutamate. The polypeptide is Arginine biosynthesis bifunctional protein ArgJ, mitochondrial (Malassezia globosa (strain ATCC MYA-4612 / CBS 7966) (Dandruff-associated fungus)).